The chain runs to 228 residues: MHDFLKAFKDAFPHTISIFLGYLLMGMTFGMLLAQQGYDYKVALFMSLFIYAGAIQFVAITLLSAQASLMNVVIVSLLVNARQTCYALSMLDRFKNTKWRLPYLAHALTDETFALLNLYAPKKGVNETDFMFSISLLNHSYWIFGSLVGSLVGSHFSFDTQGMEFVMTAIFIVLFMEQYKRNTNHKNAWLGIAIAVVCLALFGTEYFLLIALVLMVLALILFRKQLEC.

5 helical membrane passes run 14-34 (HTISIFLGYLLMGMTFGMLLA), 42-62 (VALFMSLFIYAGAIQFVAITL), 130-150 (FMFSISLLNHSYWIFGSLVGS), 156-176 (FSFDTQGMEFVMTAIFIVLFM), and 192-212 (IAIAVVCLALFGTEYFLLIAL).

The protein belongs to the AzlC family.

It is found in the cell membrane. This is an uncharacterized protein from Helicobacter pylori (strain J99 / ATCC 700824) (Campylobacter pylori J99).